The following is a 193-amino-acid chain: Superoxide dismutase [Fe] (193 aa).

Fe cation is bound by residues histidine 27, histidine 74, aspartate 157, and histidine 161.

This sequence belongs to the iron/manganese superoxide dismutase family. As to quaternary structure, homodimer. The cofactor is Fe cation.

The catalysed reaction is 2 superoxide + 2 H(+) = H2O2 + O2. Destroys superoxide anion radicals which are normally produced within the cells and which are toxic to biological systems. In Salmonella typhimurium (strain LT2 / SGSC1412 / ATCC 700720), this protein is Superoxide dismutase [Fe] (sodB).